The following is a 732-amino-acid chain: Translation initiation factor IF-2 (732 aa).

Residues 40–147 (PEVVEKLDHT…QQEQPMKKEK (108 aa)) are disordered. Basic and acidic residues predominate over residues 42–67 (VVEKLDHTYNKKNERPQASAPKEKQK). Residues 90-103 (KVPKKKSANKKKEG) show a composition bias toward basic residues. A compositionally biased stretch (basic and acidic residues) spans 104–117 (KKHDLQLQQQEKKI). A compositionally biased stretch (basic residues) spans 118-129 (FHQQKKKIKGKA). The tr-type G domain maps to 233 to 402 (ERPPVVTIMG…LLVSEMEELK (170 aa)). Positions 242–249 (GHVDHGKT) are G1. 242–249 (GHVDHGKT) is a GTP binding site. The interval 267–271 (GITQH) is G2. Residues 288 to 291 (DTPG) form a G3 region. GTP contacts are provided by residues 288–292 (DTPGH) and 342–345 (NKMD). A G4 region spans residues 342 to 345 (NKMD). Positions 378 to 380 (SAK) are G5.

This sequence belongs to the TRAFAC class translation factor GTPase superfamily. Classic translation factor GTPase family. IF-2 subfamily.

The protein resides in the cytoplasm. In terms of biological role, one of the essential components for the initiation of protein synthesis. Protects formylmethionyl-tRNA from spontaneous hydrolysis and promotes its binding to the 30S ribosomal subunits. Also involved in the hydrolysis of GTP during the formation of the 70S ribosomal complex. This chain is Translation initiation factor IF-2, found in Geobacillus sp. (strain WCH70).